Here is a 55-residue protein sequence, read N- to C-terminus: Large ribosomal subunit protein bL33 (55 aa).

It belongs to the bacterial ribosomal protein bL33 family.

This is Large ribosomal subunit protein bL33 from Caulobacter vibrioides (strain ATCC 19089 / CIP 103742 / CB 15) (Caulobacter crescentus).